A 211-amino-acid polypeptide reads, in one-letter code: PITH domain-containing protein GA19395 (211 aa).

Residues 20–192 (DHALEMGIEY…GVTICNYEAR (173 aa)) form the PITH domain.

It belongs to the PITHD1 family.

This chain is PITH domain-containing protein GA19395, found in Drosophila pseudoobscura pseudoobscura (Fruit fly).